Consider the following 93-residue polypeptide: Large ribosomal subunit protein bL31 (93 aa).

Residues 68-93 are disordered; that stretch reads GSADAAADEKKTDAKNNNKDNTSKED. The span at 74-93 shows a compositional bias: basic and acidic residues; the sequence is ADEKKTDAKNNNKDNTSKED.

This sequence belongs to the bacterial ribosomal protein bL31 family. Type A subfamily. In terms of assembly, part of the 50S ribosomal subunit.

Its function is as follows. Binds the 23S rRNA. The polypeptide is Large ribosomal subunit protein bL31 (Prochlorococcus marinus (strain MIT 9303)).